The sequence spans 172 residues: Lectin (172 aa).

Residues 1-20 (MVWCLADLRAYVLVLLVISG) form the signal peptide. Positions 36 to 172 (DCTPGWDCHF…ICKYTTPCRY (137 aa)) constitute a C-type lectin domain. Disulfide bonds link Cys65-Cys164 and Cys140-Cys156. N-linked (GlcNAc...) asparagine glycosylation occurs at Asn93.

Heterodimer. Anterior part of oviduct.

Its subcellular location is the secreted. Functionally, may be involved in protection of eggs and embryos against microorganisms. Calcium-dependent lectin with specificity to D-glucose and D-glucosamine. Can agglutinate microorganisms in vivo. This is Lectin (LEC) from Pleurodeles waltl (Iberian ribbed newt).